A 240-amino-acid polypeptide reads, in one-letter code: Cysteine-rich secretory protein (240 aa).

The first 19 residues, 1–19 (MIAFIVLPILAAVLQQSSG), serve as a signal peptide directing secretion. An SCP domain is found at 38-166 (VDLHNSLRRS…EYSYFYVCQY (129 aa)). 8 cysteine pairs are disulfide-bonded: C75–C153, C92–C167, C148–C164, C186–C193, C189–C198, C202–C235, C211–C229, and C220–C233. Residues 202 to 235 (CTKEDKYSNCKSLVQQAGCQDKQMQSDCSAICFC) form the ShKT domain.

The protein belongs to the CRISP family. As to expression, expressed by the venom gland.

The protein localises to the secreted. Weakly blocks contraction of smooth muscle elicited by high potassium-induced depolarization, but does not block caffeine-stimulated contraction. May target voltage-gated calcium channels on smooth muscle. This Crotalus adamanteus (Eastern diamondback rattlesnake) protein is Cysteine-rich secretory protein.